Consider the following 375-residue polypeptide: Chaperone protein DnaJ (375 aa).

The J domain maps to 5–69 (DYYEVLGVGK…QKRAHYDQFG (65 aa)). A CR-type zinc finger spans residues 132–214 (GKETTIEIPR…CGGTGKVKKR (83 aa)). Residues Cys-145, Cys-148, Cys-162, Cys-165, Cys-188, Cys-191, Cys-202, and Cys-205 each contribute to the Zn(2+) site. CXXCXGXG motif repeat units follow at residues 145-152 (CETCSGSG), 162-169 (CSHCGGSG), 188-195 (CHYCNGTG), and 202-209 (CSTCGGTG).

It belongs to the DnaJ family. In terms of assembly, homodimer. Zn(2+) serves as cofactor.

The protein resides in the cytoplasm. In terms of biological role, participates actively in the response to hyperosmotic and heat shock by preventing the aggregation of stress-denatured proteins and by disaggregating proteins, also in an autonomous, DnaK-independent fashion. Unfolded proteins bind initially to DnaJ; upon interaction with the DnaJ-bound protein, DnaK hydrolyzes its bound ATP, resulting in the formation of a stable complex. GrpE releases ADP from DnaK; ATP binding to DnaK triggers the release of the substrate protein, thus completing the reaction cycle. Several rounds of ATP-dependent interactions between DnaJ, DnaK and GrpE are required for fully efficient folding. Also involved, together with DnaK and GrpE, in the DNA replication of plasmids through activation of initiation proteins. The protein is Chaperone protein DnaJ of Bacillus licheniformis (strain ATCC 14580 / DSM 13 / JCM 2505 / CCUG 7422 / NBRC 12200 / NCIMB 9375 / NCTC 10341 / NRRL NRS-1264 / Gibson 46).